A 274-amino-acid polypeptide reads, in one-letter code: Large ribosomal subunit protein uL2 (274 aa).

Positions 197–274 are disordered; the sequence is NSDHALEKSG…SKYIIERRKK (78 aa). Basic residues-rich tracts occupy residues 207 to 220 and 244 to 274; these read KAGR…RPHN and PRSR…RRKK.

Belongs to the universal ribosomal protein uL2 family. Part of the 50S ribosomal subunit. Forms a bridge to the 30S subunit in the 70S ribosome.

One of the primary rRNA binding proteins. Required for association of the 30S and 50S subunits to form the 70S ribosome, for tRNA binding and peptide bond formation. It has been suggested to have peptidyltransferase activity; this is somewhat controversial. Makes several contacts with the 16S rRNA in the 70S ribosome. The polypeptide is Large ribosomal subunit protein uL2 (Porphyromonas gingivalis (strain ATCC BAA-308 / W83)).